The primary structure comprises 140 residues: uncharacterized protein (140 aa).

This is an uncharacterized protein from Caenorhabditis elegans.